The chain runs to 188 residues: UPF0301 protein XAC2918 (188 aa).

It belongs to the UPF0301 (AlgH) family.

This Xanthomonas axonopodis pv. citri (strain 306) protein is UPF0301 protein XAC2918.